Consider the following 213-residue polypeptide: C-type lectin domain family 4 member C (213 aa).

Over 1–21 (MVPEEEPQDREKGLWWFQLKV) the chain is Cytoplasmic. The helical; Signal-anchor for type II membrane protein transmembrane segment at 22 to 44 (WSMAVVSILLLSVCFTVSSVVPH) threads the bilayer. The Extracellular segment spans residues 45–213 (NFMYSKTVKR…SICKMKKIYI (169 aa)). Intrachain disulfides connect C70/C82 and C83/C94. Residues 90–207 (FQSSCYFIST…CHVPQKSICK (118 aa)) form the C-type lectin domain. Residues N110 and N137 are each glycosylated (N-linked (GlcNAc...) asparagine). 2 disulfides stabilise this stretch: C111-C206 and C180-C198. Position 139 (S139) interacts with a carbohydrate. The N-linked (GlcNAc...) asparagine glycan is linked to N164. 3 residues coordinate Ca(2+): E172, N174, and E178. A carbohydrate is bound by residues E178, 184–186 (NFR), N194, 194–195 (ND), and Q202. Positions 194 and 195 each coordinate Ca(2+).

As to quaternary structure, homodimer. In terms of tissue distribution, expressed in plasmacytoid dendritic cells (PDCs). Constitutively expressed in immature monocyte-derived dendritic cells (iMDDC) and is significantly down-regulated upon maturation with LPS but not with TNF-alpha.

Its subcellular location is the cell membrane. In terms of biological role, lectin-type cell surface receptor which may play a role in antigen capturing by dendritic cells. Specifically recognizes non-sialylated galactose-terminated biantennary glycans containing the trisaccharide epitope Gal(beta1-3/4)GlcNAc(beta1-2)Man. Binds to serum IgG. Efficiently targets ligand into antigen-processing and peptide-loading compartments for presentation to T-cells. May mediate potent inhibition of induction of IFN-alpha/beta expression in plasmacytoid dendritic cells. May act as a signaling receptor that activates protein-tyrosine kinases and mobilizes intracellular calcium. The sequence is that of C-type lectin domain family 4 member C (CLEC4C) from Homo sapiens (Human).